A 560-amino-acid chain; its full sequence is Chaperonin GroEL 2 (560 aa).

Residues 29–32, 86–90, Gly-413, 478–480, and Asp-494 each bind ATP; these read TLGP, DGTTT, and NAA.

The protein belongs to the chaperonin (HSP60) family. As to quaternary structure, forms a cylinder of 14 subunits composed of two heptameric rings stacked back-to-back. Interacts with the co-chaperonin GroES.

The protein resides in the cytoplasm. The enzyme catalyses ATP + H2O + a folded polypeptide = ADP + phosphate + an unfolded polypeptide.. Its function is as follows. Together with its co-chaperonin GroES, plays an essential role in assisting protein folding. The GroEL-GroES system forms a nano-cage that allows encapsulation of the non-native substrate proteins and provides a physical environment optimized to promote and accelerate protein folding. This Nostoc sp. (strain PCC 7120 / SAG 25.82 / UTEX 2576) protein is Chaperonin GroEL 2.